Reading from the N-terminus, the 826-residue chain is Ferric-pyoverdine M114 receptor PbuA (826 aa).

The first 44 residues, 1 to 44 (MSASRFMLRPLTRALLMHGATRTRLAGTGLGLALTLTAAPYVQA), serve as a signal peptide directing secretion. A TonB box motif is present at residues 110 to 119 (DGNTVTVLGP). The TBDR plug domain maps to 160-271 (SLKETPQSVT…TAGGVNFVRK (112 aa)). The TBDR beta-barrel domain occupies 276-826 (TAHTQLSLSA…NFVMSVKADF (551 aa)). A TonB C-terminal box motif is present at residues 809-826 (GNFYGDPRNFVMSVKADF).

The protein belongs to the TonB-dependent receptor family.

The protein resides in the cell outer membrane. Specific receptor for the siderophore ferric pyoverdine (pseudobactin) M114. In Pseudomonas sp. (strain M114), this protein is Ferric-pyoverdine M114 receptor PbuA (pbuA).